The chain runs to 440 residues: MRLSRFFMPILKENPKEAEIVSHRLMLRAGMIRQQSQGIYSWLPLGKRVLDKVNAIIRDEQNRAGAIELSMPTLQSAELWQESGRYDAYGKEMLRIKDRQDRPMLYGPTNEEMVTDIFRSSVKSYKDLPLNLYHIQLKFRDEIRPRFGTMRSREFMMKDAYSFDLTREAAEHSYNKMFAAYLRTFDRLGLRAIPMRADTGPIGGKLSHEFIILADTGESEVFCHKDFVDFDVPGEHTDFDSVEGLQAIFDKWTSLYAATSEMHDEAAFNAVPEGDRLSARGIEVGHIFYFGTKYSEPMGAKVQGPDGKEHFVHMGSYGIGPTRLVPAIIEASHDDNGIIWPASVAPFDIVVINMKAGDQACDDTCELIYAALSKAGKDVLYDDTDDRAGTKFATADLIGVPVQIIAGPRAVANGEVEVKDRKTGARETMTIEAAINRFVA.

The protein belongs to the class-II aminoacyl-tRNA synthetase family. ProS type 2 subfamily. Homodimer.

The protein resides in the cytoplasm. The catalysed reaction is tRNA(Pro) + L-proline + ATP = L-prolyl-tRNA(Pro) + AMP + diphosphate. Its function is as follows. Catalyzes the attachment of proline to tRNA(Pro) in a two-step reaction: proline is first activated by ATP to form Pro-AMP and then transferred to the acceptor end of tRNA(Pro). The sequence is that of Proline--tRNA ligase from Rhizobium johnstonii (strain DSM 114642 / LMG 32736 / 3841) (Rhizobium leguminosarum bv. viciae).